A 111-amino-acid polypeptide reads, in one-letter code: Cystatin (111 aa).

Residues 3–103 enclose the Cystatin domain; it reads GGLSPRDVTD…CRFEVWSRPW (101 aa). Positions 47–51 match the Secondary area of contact motif; it reads QVVSG. A disulfide bridge connects residues Cys65 and Cys81.

This sequence belongs to the cystatin family. Expressed by the venom gland.

Its subcellular location is the secreted. Inhibits various C1 cysteine proteases including cathepsin L, papain and cathepsin B. This protein has no toxic activity and its function in the venom is unknown. It may play a role as housekeeping or regulatory protein. The chain is Cystatin from Bitis arietans (African puff adder).